Consider the following 341-residue polypeptide: Phenylalanine--tRNA ligase alpha subunit (341 aa).

Position 254 (glutamate 254) interacts with Mg(2+).

This sequence belongs to the class-II aminoacyl-tRNA synthetase family. Phe-tRNA synthetase alpha subunit type 1 subfamily. In terms of assembly, tetramer of two alpha and two beta subunits. Mg(2+) serves as cofactor.

The protein localises to the cytoplasm. The catalysed reaction is tRNA(Phe) + L-phenylalanine + ATP = L-phenylalanyl-tRNA(Phe) + AMP + diphosphate + H(+). In Chlorobaculum parvum (strain DSM 263 / NCIMB 8327) (Chlorobium vibrioforme subsp. thiosulfatophilum), this protein is Phenylalanine--tRNA ligase alpha subunit.